A 285-amino-acid polypeptide reads, in one-letter code: 2-dehydro-3-deoxyphosphooctonate aldolase (285 aa).

The protein belongs to the KdsA family.

It localises to the cytoplasm. It catalyses the reaction D-arabinose 5-phosphate + phosphoenolpyruvate + H2O = 3-deoxy-alpha-D-manno-2-octulosonate-8-phosphate + phosphate. The protein operates within carbohydrate biosynthesis; 3-deoxy-D-manno-octulosonate biosynthesis; 3-deoxy-D-manno-octulosonate from D-ribulose 5-phosphate: step 2/3. It participates in bacterial outer membrane biogenesis; lipopolysaccharide biosynthesis. This chain is 2-dehydro-3-deoxyphosphooctonate aldolase, found in Acinetobacter baylyi (strain ATCC 33305 / BD413 / ADP1).